We begin with the raw amino-acid sequence, 434 residues long: 3-phosphoshikimate 1-carboxyvinyltransferase (434 aa).

3-phosphoshikimate contacts are provided by K22, S23, and R27. K22 contacts phosphoenolpyruvate. Phosphoenolpyruvate is bound by residues G93 and R121. Residues S168, S169, Q170, S199, D320, and K347 each contribute to the 3-phosphoshikimate site. Residue Q170 participates in phosphoenolpyruvate binding. D320 acts as the Proton acceptor in catalysis. Phosphoenolpyruvate contacts are provided by R351, R394, and K419.

It belongs to the EPSP synthase family. As to quaternary structure, monomer.

Its subcellular location is the cytoplasm. It carries out the reaction 3-phosphoshikimate + phosphoenolpyruvate = 5-O-(1-carboxyvinyl)-3-phosphoshikimate + phosphate. It functions in the pathway metabolic intermediate biosynthesis; chorismate biosynthesis; chorismate from D-erythrose 4-phosphate and phosphoenolpyruvate: step 6/7. In terms of biological role, catalyzes the transfer of the enolpyruvyl moiety of phosphoenolpyruvate (PEP) to the 5-hydroxyl of shikimate-3-phosphate (S3P) to produce enolpyruvyl shikimate-3-phosphate and inorganic phosphate. The sequence is that of 3-phosphoshikimate 1-carboxyvinyltransferase from Burkholderia orbicola (strain MC0-3).